Here is a 219-residue protein sequence, read N- to C-terminus: Proteasome subunit beta type-9 (219 aa).

Residues 1–20 (MLRAGAPTAGSFRTEEVHTG) constitute a propeptide, removed in mature form. The Nucleophile role is filled by Thr-21. N6-acetyllysine occurs at positions 53 and 109.

This sequence belongs to the peptidase T1B family. The 26S proteasome consists of a 20S proteasome core and two 19S regulatory subunits. The 20S proteasome core is composed of 28 subunits that are arranged in four stacked rings, resulting in a barrel-shaped structure. The two end rings are each formed by seven alpha subunits, and the two central rings are each formed by seven beta subunits. The catalytic chamber with the active sites is on the inside of the barrel. Component of the immunoproteasome, where it displaces the equivalent housekeeping subunit PSMB6. Component of the spermatoproteasome, a form of the proteasome specifically found in testis. Autocleaved. The resulting N-terminal Thr residue of the mature subunit is responsible for the nucleophile proteolytic activity.

Its subcellular location is the cytoplasm. It is found in the nucleus. It catalyses the reaction Cleavage of peptide bonds with very broad specificity.. The proteasome is a multicatalytic proteinase complex which is characterized by its ability to cleave peptides with Arg, Phe, Tyr, Leu, and Glu adjacent to the leaving group at neutral or slightly basic pH. The proteasome has an ATP-dependent proteolytic activity. This subunit is involved in antigen processing to generate class I binding peptides. The polypeptide is Proteasome subunit beta type-9 (Psmb9) (Mus terricolor (Earth-colored mouse)).